Here is a 291-residue protein sequence, read N- to C-terminus: Quinol oxidase subunit 2 (291 aa).

The N-terminal stretch at 1-28 is a signal peptide; sequence MQLKKAFWKLASLLPLSLLLFLGGCDKK. Helical transmembrane passes span 49 to 69 and 91 to 111; these read SFLL…VILI and LEII…IPTV.

This sequence belongs to the cytochrome c oxidase subunit 2 family.

Its subcellular location is the cell membrane. The enzyme catalyses 2 a quinol + O2 = 2 a quinone + 2 H2O. In terms of biological role, catalyzes quinol oxidation with the concomitant reduction of oxygen to water. Subunit II transfers the electrons from a quinol to the binuclear center of the catalytic subunit I. In Bacillus anthracis, this protein is Quinol oxidase subunit 2.